The following is a 494-amino-acid chain: Sugar phosphate exchanger 3 (494 aa).

Residues 10–30 (GALLTSFSHHHLAVFLLTFFS) traverse the membrane as a helical segment. Asn-58 carries an N-linked (GlcNAc...) asparagine glycan. 5 helical membrane-spanning segments follow: residues 81 to 101 (TLFLGTLDTVFLFSYAVGLFI), 113 to 133 (WVLSFGMCSSAFVVFVFGTLT), 146 to 166 (GLWIVNGLLQSTGWPCVVAVM), 177 to 197 (VVFGLWSACASVGNILGAFLA), and 209 to 229 (FLVTASVQFAGGIIIFFGLLV). Residues 240-261 (GAEESSEEDSQRPLIDGAENED) form a disordered region. A run of 6 helical transmembrane segments spans residues 297–317 (LAYACLKLVNYSFFFWLPFYL), 333–353 (IWYDVGGIIGGTLLGFISDVL), 357–377 (APVLALSLFLAVWSLVGYSRS), 386–406 (LLMTITGFFIGGPSNMVSSAI), 428–448 (GIVDGTGSIGAAVGQYLVSLI), and 457–477 (VFYFFILMTSCTILFILPLIV).

Belongs to the major facilitator superfamily. Organophosphate:Pi antiporter (OPA) (TC 2.A.1.4) family. As to quaternary structure, interacts with ATRAID; the interaction is direct and both proteins are mutually dependent for their stability. Glycosylated.

It is found in the endoplasmic reticulum membrane. Its subcellular location is the lysosome membrane. Functionally, unlike the other SLC37 members, lacks glucose-6-phosphate antiporter activity. In osteoclasts, forms a transporter complex with ATRAID for nitrogen-containing-bisphophonates (N-BPs) required for releasing N-BP molecules that have trafficked to lysosomes through fluid-phase endocytosis into the cytosol. In Mus musculus (Mouse), this protein is Sugar phosphate exchanger 3 (Slc37a3).